A 298-amino-acid chain; its full sequence is ADP/ATP translocase 1 (298 aa).

Topologically, residues 1-7 (MSDQALS) are mitochondrial intermembrane. N-acetylserine is present on Ser-2. One copy of the Solcar 1 repeat lies at 6-98 (LSFLKDFLAG…FAFKDKYKQI (93 aa)). Residue Ser-7 is modified to Phosphoserine. Residues 8 to 37 (FLKDFLAGGVAAAISKTAVAPIERVKLLLQ) form a helical membrane-spanning segment. Residues 38-74 (VQHASKQISAEKQYKGIIDCVVRIPKEQGFLSFWRGN) are Mitochondrial matrix-facing. Lys-52 is modified (N6,N6,N6-trimethyllysine). Lys-52 bears the N6-methyllysine mark. The chain crosses the membrane as a helical span at residues 75-99 (LANVIRYFPTQALNFAFKDKYKQIF). Residues Arg-80 and Lys-92 each contribute to the ADP site. Residues 100–109 (LGGVDRHKQF) are Mitochondrial intermembrane-facing. The chain crosses the membrane as a helical span at residues 110-130 (WRYFAGNLASGGAAGATSLCF). 2 Solcar repeats span residues 111–201 (RYFA…AKGM) and 212–297 (VSWM…IKKF). Residues 131-178 (VYPLDFARTRLAADVGKGAAQREFTGLGNCITKIFKSDGLRGLYQGFN) are Mitochondrial matrix-facing. Lys-147 is modified (N6-succinyllysine). Cys-160 bears the S-nitrosocysteine mark. A helical transmembrane segment spans residues 179–199 (VSVQGIIIYRAAYFGVYDTAK). Residues 200 to 210 (GMLPDPKNVHI) lie on the Mitochondrial intermembrane side of the membrane. Residues 211–231 (IVSWMIAQTVTAVAGLVSYPF) form a helical membrane-spanning segment. The Mitochondrial matrix segment spans residues 232–273 (DTVRRRMMMQSGRKGADIMYTGTVDCWRKIAKDEGPKAFFKG). Arg-235 lines the ADP pocket. An important for transport activity region spans residues 235-240 (RRRMMM). Positions 235–240 (RRRMMM) match the Nucleotide carrier signature motif motif. Residues Lys-245 and Lys-272 each carry the N6-succinyllysine modification. Residues 274 to 291 (AWSNVLRGMGGAFVLVLY) traverse the membrane as a helical segment. Over 292–298 (DEIKKFV) the chain is Mitochondrial intermembrane.

The protein belongs to the mitochondrial carrier (TC 2.A.29) family. In terms of assembly, monomer. Found in a complex with ARL2, ARL2BP and SLC25A4/ANT1. Interacts with ARL2BP. Interacts with TIMM44; leading to inhibit the presequence translocase TIMM23, thereby promoting stabilization of PINK1. Under cell death induction, transglutaminated by TGM2. Transglutamination leads to formation of covalent cross-links between a glutamine and the epsilon-amino group of a lysine residue, forming polymers. In terms of tissue distribution, detected in heart muscle (at protein level). Detected in heart.

It is found in the mitochondrion inner membrane. The protein localises to the membrane. The enzyme catalyses ADP(in) + ATP(out) = ADP(out) + ATP(in). It carries out the reaction H(+)(in) = H(+)(out). Its activity is regulated as follows. The matrix-open state (m-state) is inhibited by the membrane-permeable bongkrekic acid (BKA). The cytoplasmic-open state (c-state) is inhibited by the membrane-impermeable toxic inhibitor carboxyatractyloside (CATR). Proton transporter activity is inhibited by ADP:ATP antiporter activity. Its function is as follows. ADP:ATP antiporter that mediates import of ADP into the mitochondrial matrix for ATP synthesis, and export of ATP out to fuel the cell. Cycles between the cytoplasmic-open state (c-state) and the matrix-open state (m-state): operates by the alternating access mechanism with a single substrate-binding site intermittently exposed to either the cytosolic (c-state) or matrix (m-state) side of the inner mitochondrial membrane. In addition to its ADP:ATP antiporter activity, also involved in mitochondrial uncoupling and mitochondrial permeability transition pore (mPTP) activity. Plays a role in mitochondrial uncoupling by acting as a proton transporter: proton transport uncouples the proton flows via the electron transport chain and ATP synthase to reduce the efficiency of ATP production and cause mitochondrial thermogenesis. Proton transporter activity is inhibited by ADP:ATP antiporter activity, suggesting that SLC25A4/ANT1 acts as a master regulator of mitochondrial energy output by maintaining a delicate balance between ATP production (ADP:ATP antiporter activity) and thermogenesis (proton transporter activity). Proton transporter activity requires free fatty acids as cofactor, but does not transport it. Probably mediates mitochondrial uncoupling in tissues that do not express UCP1. Also plays a key role in mPTP opening, a non-specific pore that enables free passage of the mitochondrial membranes to solutes of up to 1.5 kDa, and which contributes to cell death. It is however unclear if SLC25A4/ANT1 constitutes a pore-forming component of mPTP or regulates it. Acts as a regulator of mitophagy independently of ADP:ATP antiporter activity: promotes mitophagy via interaction with TIMM44, leading to inhibit the presequence translocase TIMM23, thereby promoting stabilization of PINK1. This is ADP/ATP translocase 1 from Bos taurus (Bovine).